The following is a 39-amino-acid chain: Photosystem II reaction center protein L (39 aa).

Residues 18 to 38 (SLYLGLLLVFVTAVLFTSYFF) form a helical membrane-spanning segment.

It belongs to the PsbL family. As to quaternary structure, PSII is composed of 1 copy each of membrane proteins PsbA, PsbB, PsbC, PsbD, PsbE, PsbF, PsbH, PsbI, PsbJ, PsbK, PsbL, PsbM, PsbT, PsbX, PsbY, Psb30/Ycf12, peripheral proteins PsbO, CyanoQ (PsbQ), PsbU, PsbV and a large number of cofactors. It forms dimeric complexes.

The protein localises to the cellular thylakoid membrane. Its function is as follows. One of the components of the core complex of photosystem II (PSII). PSII is a light-driven water:plastoquinone oxidoreductase that uses light energy to abstract electrons from H(2)O, generating O(2) and a proton gradient subsequently used for ATP formation. It consists of a core antenna complex that captures photons, and an electron transfer chain that converts photonic excitation into a charge separation. This subunit is found at the monomer-monomer interface and is required for correct PSII assembly and/or dimerization. This is Photosystem II reaction center protein L from Prochlorococcus marinus (strain MIT 9313).